A 514-amino-acid chain; its full sequence is MSQSHIGGVSRREFLAKVAAGGAGALMSFAGPVIEKAYGAGPCSGHLTDIEHFVFFMQENRSFDHYFGTLSGTDGFNTVSPLFQQKGWNPMTQALDATGVTMPYRFDTTRGPFLDGACVNDPDHSWVAMHESWNGGVNDNWLPAQAKTRSAAHTPTVMGYYTRQDIPIHYLLADAFTVCDRYFCSVLGPTLPNRLYWLSATIDPDGQNGGPELQSPTFQPVRRFGWRIMPQNLSDAGVSWKVYRNKTLGPISSVLTYGSLVTSFKQSADPRSDLVRFGVAPSYPASFAADVLANRLPRVSWVIPNVLESEHPAVPAAAGAFAIVNILRILLANPAVWEKTALIVSYDENGGFFDHVVPATAPAGTPGEYVTVPDIDQVPGSGGIRGPIGLGFRVPCFVISPYSRGPQMVHDTFDHTSQLRLLETRFGVPVPNLTAWRRSVTGDMTSTFNFAVPPNSSWPNLDYPGLHALSTVPQCVPNAALGTINRGIPYRVPDPQIMPTQETTPTRGIPSGPC.

Residues 1–37 (MSQSHIGGVSRREFLAKVAAGGAGALMSFAGPVIEKA) constitute a signal peptide (tat-type signal). A disordered region spans residues 492–514 (VPDPQIMPTQETTPTRGIPSGPC).

It belongs to the bacterial phospholipase C family. Predicted to be exported by the Tat system. The position of the signal peptide cleavage has not been experimentally proven.

The protein resides in the secreted. Its subcellular location is the cell wall. The enzyme catalyses a 1,2-diacyl-sn-glycero-3-phosphocholine + H2O = phosphocholine + a 1,2-diacyl-sn-glycerol + H(+). In terms of biological role, involved in virulence. Induces cytotoxic effects on mouse macrophage cell lines, via direct or indirect enzymatic hydrolysis of cell membrane phospholipids. Hydrolyzes phosphatidylcholine. The polypeptide is Phospholipase C D (Mycobacterium tuberculosis (strain CDC 1551 / Oshkosh)).